A 540-amino-acid polypeptide reads, in one-letter code: Probable protein kinase UbiB (540 aa).

A helical transmembrane segment spans residues 24-44; that stretch reads LLFDQPLLPWWLASLRLLMPW. The region spanning 126-494 is the Protein kinase domain; it reads RFDVEPLASA…RRRQGDRWAL (369 aa). ATP contacts are provided by residues 132 to 140 and K154; that span reads LASASVAQV. The active-site Proton acceptor is the D289. 2 helical membrane passes run 496-516 and 518-538; these read LLGA…AETA and LAAP…YLIV.

Belongs to the ABC1 family. UbiB subfamily.

The protein localises to the cell inner membrane. It functions in the pathway cofactor biosynthesis; ubiquinone biosynthesis [regulation]. Is probably a protein kinase regulator of UbiI activity which is involved in aerobic coenzyme Q (ubiquinone) biosynthesis. The sequence is that of Probable protein kinase UbiB from Pseudomonas putida (strain ATCC 700007 / DSM 6899 / JCM 31910 / BCRC 17059 / LMG 24140 / F1).